Here is a 209-residue protein sequence, read N- to C-terminus: Chalcone isomerase-like protein 2 (209 aa).

This sequence belongs to the chalcone isomerase family. As to quaternary structure, component an active demethylxanthohumol (DMX) biosynthetic metabolon in glandular trichomes (lupulin glands) that encompasses a chalcone synthase (CHS) and a membrane-bound prenyltransferase. Interacts with CHS_H1 and PT1L. In terms of tissue distribution, mostly expressed in glandular trichomes (lupulin glands), and, to a lower extent, in cones, cones bracts, leaves, stems and roots.

The protein localises to the cytoplasm. The catalysed reaction is a chalcone = a flavanone.. It participates in secondary metabolite biosynthesis; flavonoid biosynthesis. Involved in the biosynthesis of prenylated phenolics natural products which contribute to the bitter taste of beer and display broad biological activities. Involved in anthocyanin biosynthesis. Polyketide binding proteins (PBP) which promotes the catalytic activities of CHS_H1 and PT1L and triggers demethylxanthohumol (DMX) production. This is Chalcone isomerase-like protein 2 from Humulus lupulus (European hop).